The chain runs to 141 residues: Large ribosomal subunit protein uL11 (141 aa).

The protein belongs to the universal ribosomal protein uL11 family. Part of the ribosomal stalk of the 50S ribosomal subunit. Interacts with L10 and the large rRNA to form the base of the stalk. L10 forms an elongated spine to which L12 dimers bind in a sequential fashion forming a multimeric L10(L12)X complex. In terms of processing, one or more lysine residues are methylated.

In terms of biological role, forms part of the ribosomal stalk which helps the ribosome interact with GTP-bound translation factors. The polypeptide is Large ribosomal subunit protein uL11 (Prochlorococcus marinus (strain NATL1A)).